The following is a 158-amino-acid chain: NAD(P)H-quinone oxidoreductase subunit J, chloroplastic (158 aa).

This sequence belongs to the complex I 30 kDa subunit family. As to quaternary structure, NDH is composed of at least 16 different subunits, 5 of which are encoded in the nucleus.

It is found in the plastid. It localises to the chloroplast thylakoid membrane. It carries out the reaction a plastoquinone + NADH + (n+1) H(+)(in) = a plastoquinol + NAD(+) + n H(+)(out). The catalysed reaction is a plastoquinone + NADPH + (n+1) H(+)(in) = a plastoquinol + NADP(+) + n H(+)(out). In terms of biological role, NDH shuttles electrons from NAD(P)H:plastoquinone, via FMN and iron-sulfur (Fe-S) centers, to quinones in the photosynthetic chain and possibly in a chloroplast respiratory chain. The immediate electron acceptor for the enzyme in this species is believed to be plastoquinone. Couples the redox reaction to proton translocation, and thus conserves the redox energy in a proton gradient. The polypeptide is NAD(P)H-quinone oxidoreductase subunit J, chloroplastic (Nasturtium officinale (Watercress)).